The chain runs to 151 residues: UPF0735 ACT domain-containing protein SSP1116 (151 aa).

The ACT domain occupies Thr74–Met149.

This sequence belongs to the UPF0735 family.

The chain is UPF0735 ACT domain-containing protein SSP1116 from Staphylococcus saprophyticus subsp. saprophyticus (strain ATCC 15305 / DSM 20229 / NCIMB 8711 / NCTC 7292 / S-41).